We begin with the raw amino-acid sequence, 357 residues long: Protein Wnt-9b (357 aa).

A signal peptide spans 1–22; the sequence is MRPPPALALAGLCLLALPAAAA. Disulfide bonds link C89–C100, C135–C143, C145–C162, C210–C224, C212–C219, C291–C316, C305–C311, C315–C355, C331–C346, C333–C343, and C338–C339. N99 carries N-linked (GlcNAc...) asparagine glycosylation. Residue S216 is the site of O-palmitoleoyl serine; by PORCN attachment.

This sequence belongs to the Wnt family. Forms a soluble 1:1 complex with AFM; this prevents oligomerization and is required for prolonged biological activity. The complex with AFM may represent the physiological form in body fluids. Component of the Wnt-Fzd-LRP5-LRP6 signaling complex that contains a WNT protein, a FZD protein and LRP5 or LRP6. Interacts directly in the complex with LRP6. Interacts with PKD1 (via extracellular domain). Palmitoleoylation is required for efficient binding to frizzled receptors. Depalmitoleoylation leads to Wnt signaling pathway inhibition. As to expression, moderately expressed in fetal kidney and adult kidney. Also found in brain.

Its subcellular location is the secreted. The protein localises to the extracellular space. The protein resides in the extracellular matrix. Its function is as follows. Ligand for members of the frizzled family of seven transmembrane receptors. Functions in the canonical Wnt/beta-catenin signaling pathway. Required for normal embryonic kidney development, and for normal development of the urogenital tract, including uterus and part of the oviduct and the upper vagina in females, and epididymis and vas deferens in males. Activates a signaling cascade in the metanephric mesenchyme that induces tubulogenesis. Acts upstream of WNT4 in the signaling pathways that mediate development of kidney tubules and the Muellerian ducts. Plays a role in cranofacial development and is required for normal fusion of the palate during embryonic development. The protein is Protein Wnt-9b (WNT9B) of Homo sapiens (Human).